The primary structure comprises 343 residues: Thiamine thiazole synthase 4, chloroplastic (343 aa).

Residues alanine 89, glutamate 109–glutamine 110, glycine 117, and alanine 182 contribute to the substrate site. Position 211 is a 2,3-didehydroalanine (Cys) (cysteine 211). Residues aspartate 213, histidine 228, methionine 280, and arginine 290–glycine 292 each bind substrate.

This sequence belongs to the THI4 family. In terms of assembly, homooctamer. Fe cation is required as a cofactor. Post-translationally, during the catalytic reaction, a sulfide is transferred from Cys-211 to a reaction intermediate, generating a dehydroalanine residue.

The protein resides in the plastid. Its subcellular location is the chloroplast. It catalyses the reaction [ADP-thiazole synthase]-L-cysteine + glycine + NAD(+) = [ADP-thiazole synthase]-dehydroalanine + ADP-5-ethyl-4-methylthiazole-2-carboxylate + nicotinamide + 3 H2O + 2 H(+). Functionally, involved in biosynthesis of the thiamine precursor thiazole. Catalyzes the conversion of NAD and glycine to adenosine diphosphate 5-(2-hydroxyethyl)-4-methylthiazole-2-carboxylic acid (ADT), an adenylated thiazole intermediate. The reaction includes an iron-dependent sulfide transfer from a conserved cysteine residue of the protein to a thiazole intermediate. The enzyme can only undergo a single turnover, which suggests it is a suicide enzyme. May have additional roles in adaptation to various stress conditions and in DNA damage tolerance. This Physcomitrium patens (Spreading-leaved earth moss) protein is Thiamine thiazole synthase 4, chloroplastic.